Reading from the N-terminus, the 302-residue chain is Aquaporin NIP3-1 (302 aa).

The disordered stretch occupies residues 1 to 31 (MEPGSTPPNGSAPATPGTPAPLFSSGGPRVD). The span at 7–21 (PPNGSAPATPGTPAP) shows a compositional bias: low complexity. 2 consecutive transmembrane segments (helical) span residues 76 to 96 (LGAEFVGTFILIFFATAAPIV) and 102 to 122 (GAISPFGNAACAGLAVATVIL). The NPA 1 signature appears at 133 to 135 (NPS). 3 helical membrane passes run 149–169 (LQVPAYVAVQALASVCAAFAL), 193–213 (AFFTEFIISFNLLFVVTAVAT), and 217–237 (AVGELAGIAVGAAVTLNILVA). The short motif at 246 to 248 (NPV) is the NPA 2 element. A helical transmembrane segment spans residues 264–284 (WIYLLAPTLGALAGASVYKAV).

Belongs to the MIP/aquaporin (TC 1.A.8) family. NIP (TC 1.A.8.12) subfamily.

The protein resides in the membrane. Its function is as follows. Aquaporins facilitate the transport of water and small neutral solutes across cell membranes. In Zea mays (Maize), this protein is Aquaporin NIP3-1 (NIP3-1).